Consider the following 313-residue polypeptide: Proline-rich protein 3 (313 aa).

The signal sequence occupies residues 1–22; that stretch reads MAITRSSLAICLILSLVTITTA. The segment at 27-312 is 35 X 5 AA approximate repeats; sequence PSSPPVYKSP…GPKAAPATPK (286 aa). 35 tandem repeats follow at residues 30 to 34, 35 to 39, 40 to 43, 44 to 48, 49 to 53, 54 to 57, 58 to 62, 64 to 67, 68 to 72, 73 to 77, 82 to 86, 87 to 91, 92 to 96, 97 to 101, 102 to 105, 106 to 110, 111 to 115, 116 to 120, 121 to 125, 126 to 131, 132 to 136, 137 to 141, 142 to 146, 147 to 150, 151 to 155, 157 to 163, 164 to 168, 169 to 174, 175 to 181, 182 to 186, 187 to 229, 258 to 262, 266 to 270, 298 to 302, and 308 to 312.

Belongs to the plant proline-rich protein superfamily. ENOD12 family. In terms of tissue distribution, exclusively expressed in roots, particularly in root hairs-containing regions, and especially in root hairs.

It localises to the secreted. It is found in the cell wall. Its function is as follows. May contribute to cell wall structure in root hairs. In Arabidopsis thaliana (Mouse-ear cress), this protein is Proline-rich protein 3 (PRP3).